Here is a 289-residue protein sequence, read N- to C-terminus: Protoheme IX farnesyltransferase 2 (289 aa).

The next 9 membrane-spanning stretches (helical) occupy residues methionine 1 to alanine 21, leucine 28 to leucine 48, tyrosine 76 to phenylalanine 96, isoleucine 100 to methionine 120, valine 125 to alanine 145, valine 155 to phenylalanine 175, leucine 199 to glycine 219, threonine 221 to leucine 241, and cysteine 260 to valine 280.

This sequence belongs to the UbiA prenyltransferase family. Protoheme IX farnesyltransferase subfamily.

The protein resides in the cell inner membrane. The catalysed reaction is heme b + (2E,6E)-farnesyl diphosphate + H2O = Fe(II)-heme o + diphosphate. It participates in porphyrin-containing compound metabolism; heme O biosynthesis; heme O from protoheme: step 1/1. Its function is as follows. Converts heme B (protoheme IX) to heme O by substitution of the vinyl group on carbon 2 of heme B porphyrin ring with a hydroxyethyl farnesyl side group. In Shewanella woodyi (strain ATCC 51908 / MS32), this protein is Protoheme IX farnesyltransferase 2.